Consider the following 46-residue polypeptide: Large ribosomal subunit protein bL36 (46 aa).

It belongs to the bacterial ribosomal protein bL36 family.

This Salmonella agona (strain SL483) protein is Large ribosomal subunit protein bL36.